The chain runs to 51 residues: Protein HokD (51 aa).

Residues 5 to 25 (KAMLIALIVICLTVIVTALVT) form a helical membrane-spanning segment.

The protein belongs to the Hok/Gef family.

It localises to the cell inner membrane. Functionally, toxic component of a type I toxin-antitoxin (TA) system. When overexpressed kills cells within minutes; causes collapse of the transmembrane potential and arrest of respiration. Its toxic effect is probably neutralized by an antisense antitoxin Sok RNA. The chain is Protein HokD (hokD) from Escherichia coli O157:H7.